A 111-amino-acid polypeptide reads, in one-letter code: Small ribosomal subunit protein bS16 (111 aa).

This sequence belongs to the bacterial ribosomal protein bS16 family.

The sequence is that of Small ribosomal subunit protein bS16 from Rickettsia canadensis (strain McKiel).